Reading from the N-terminus, the 349-residue chain is Meiotic recombination protein DMC1 homolog (349 aa).

138 to 145 provides a ligand contact to ATP; sequence GEFRSGKT. Residue arginine 240 participates in dsDNA binding. Arginine 240, phenylalanine 243, arginine 246, arginine 252, and arginine 320 together coordinate ssDNA. Arginine 246 and arginine 252 together coordinate dsDNA.

It belongs to the RecA family. DMC1 subfamily. As to quaternary structure, double stacked ring-shaped homooctamer.

It is found in the nucleus. Functionally, may participate in meiotic recombination. The sequence is that of Meiotic recombination protein DMC1 homolog (LIM15) from Lilium longiflorum (Trumpet lily).